Consider the following 248-residue polypeptide: Deoxyribose-phosphate aldolase (248 aa).

Residue aspartate 117 is the Proton donor/acceptor of the active site. Lysine 179 acts as the Schiff-base intermediate with acetaldehyde in catalysis. Lysine 208 acts as the Proton donor/acceptor in catalysis.

The protein belongs to the DeoC/FbaB aldolase family. DeoC type 1 subfamily.

The protein localises to the cytoplasm. It carries out the reaction 2-deoxy-D-ribose 5-phosphate = D-glyceraldehyde 3-phosphate + acetaldehyde. It participates in carbohydrate degradation; 2-deoxy-D-ribose 1-phosphate degradation; D-glyceraldehyde 3-phosphate and acetaldehyde from 2-deoxy-alpha-D-ribose 1-phosphate: step 2/2. In terms of biological role, catalyzes a reversible aldol reaction between acetaldehyde and D-glyceraldehyde 3-phosphate to generate 2-deoxy-D-ribose 5-phosphate. The chain is Deoxyribose-phosphate aldolase from Thermotoga petrophila (strain ATCC BAA-488 / DSM 13995 / JCM 10881 / RKU-1).